The chain runs to 524 residues: Bifunctional purine biosynthesis protein PurH (524 aa).

The region spanning 1–149 (MSDPLIKRAL…KNNESVTVLT (149 aa)) is the MGS-like domain.

Belongs to the PurH family.

It catalyses the reaction (6R)-10-formyltetrahydrofolate + 5-amino-1-(5-phospho-beta-D-ribosyl)imidazole-4-carboxamide = 5-formamido-1-(5-phospho-D-ribosyl)imidazole-4-carboxamide + (6S)-5,6,7,8-tetrahydrofolate. The catalysed reaction is IMP + H2O = 5-formamido-1-(5-phospho-D-ribosyl)imidazole-4-carboxamide. It participates in purine metabolism; IMP biosynthesis via de novo pathway; 5-formamido-1-(5-phospho-D-ribosyl)imidazole-4-carboxamide from 5-amino-1-(5-phospho-D-ribosyl)imidazole-4-carboxamide (10-formyl THF route): step 1/1. It functions in the pathway purine metabolism; IMP biosynthesis via de novo pathway; IMP from 5-formamido-1-(5-phospho-D-ribosyl)imidazole-4-carboxamide: step 1/1. In Chlorobium luteolum (strain DSM 273 / BCRC 81028 / 2530) (Pelodictyon luteolum), this protein is Bifunctional purine biosynthesis protein PurH.